Reading from the N-terminus, the 104-residue chain is SOSS complex subunit C (104 aa).

Residue Ala2 is modified to N-acetylalanine. Ser50 carries the post-translational modification Phosphoserine.

This sequence belongs to the SOSS-C family. Component of the SOSS complex, composed of SOSS-B (SOSS-B1/NABP2 or SOSS-B2/NABP1), SOSS-A/INTS3 and SOSS-C/INIP. SOSS complexes containing SOSS-B1/NABP2 are more abundant than complexes containing SOSS-B2/NABP1. Interacts with INTS3; the interaction is direct.

Its subcellular location is the nucleus. In terms of biological role, component of the SOSS complex, a multiprotein complex that functions downstream of the MRN complex to promote DNA repair and G2/M checkpoint. The SOSS complex associates with single-stranded DNA at DNA lesions and influences diverse endpoints in the cellular DNA damage response including cell-cycle checkpoint activation, recombinational repair and maintenance of genomic stability. Required for efficient homologous recombination-dependent repair of double-strand breaks (DSBs) and ATM-dependent signaling pathways. The chain is SOSS complex subunit C (INIP) from Homo sapiens (Human).